A 103-amino-acid chain; its full sequence is Large ribosomal subunit protein uL24 (103 aa).

It belongs to the universal ribosomal protein uL24 family. As to quaternary structure, part of the 50S ribosomal subunit.

One of two assembly initiator proteins, it binds directly to the 5'-end of the 23S rRNA, where it nucleates assembly of the 50S subunit. Its function is as follows. One of the proteins that surrounds the polypeptide exit tunnel on the outside of the subunit. This chain is Large ribosomal subunit protein uL24, found in Latilactobacillus sakei subsp. sakei (strain 23K) (Lactobacillus sakei subsp. sakei).